The following is a 43-amino-acid chain: LTLDRASDDTDVAAEIMSGLIALAIDSCCSDSDCNANHPDMCS.

The propeptide occupies 1–26; sequence LTLDRASDDTDVAAEIMSGLIALAID. Disulfide bonds link cysteine 28/cysteine 34 and cysteine 29/cysteine 42. Residues 30–32 form a lacks the Ser-Xaa-Pro motif that is crucial for potent interaction with nAChR region; it reads SDS.

The protein belongs to the conotoxin A superfamily. In terms of tissue distribution, expressed by the venom duct.

Its subcellular location is the secreted. Alpha-conotoxins act on postsynaptic membranes, they bind to the nicotinic acetylcholine receptors (nAChR) and thus inhibit them. Has possibly a distinct nAChR binding mode from other alpha-conotoxins, due to a different three residue motif (lacks the Ser-Xaa-Pro motif). This is Alpha-conotoxin-like Leo-A1 from Conus leopardus (Leopard cone).